Here is a 720-residue protein sequence, read N- to C-terminus: Transcription factor bHLH155 (720 aa).

Residues 522–534 (YPSSSSDQFQTSL) show a composition bias toward polar residues. The tract at residues 522–558 (YPSSSSDQFQTSLDIPKKNKKRAKPGESSRPRPRDRQ) is disordered. The Nuclear localization signal motif lies at 540-547 (NKKRAKPG). In terms of domain architecture, bHLH spans 544-593 (AKPGESSRPRPRDRQLIQDRIKELRELVPNGSKCSIDSLLERTIKHMLFL). The segment covering 545–558 (KPGESSRPRPRDRQ) has biased composition (basic and acidic residues).

The protein belongs to the bHLH protein family. LHW subfamily. As to quaternary structure, homodimer.

It localises to the nucleus. Functionally, transcription factor that may regulate root development. In Arabidopsis thaliana (Mouse-ear cress), this protein is Transcription factor bHLH155 (BHLH155).